Consider the following 340-residue polypeptide: DNA-directed RNA polymerase subunit alpha (340 aa).

Residues Met1–Asp233 form an alpha N-terminal domain (alpha-NTD) region. The tract at residues Asp246–Glu340 is alpha C-terminal domain (alpha-CTD).

The protein belongs to the RNA polymerase alpha chain family. In terms of assembly, homodimer. The RNAP catalytic core consists of 2 alpha, 1 beta, 1 beta' and 1 omega subunit. When a sigma factor is associated with the core the holoenzyme is formed, which can initiate transcription.

It carries out the reaction RNA(n) + a ribonucleoside 5'-triphosphate = RNA(n+1) + diphosphate. In terms of biological role, DNA-dependent RNA polymerase catalyzes the transcription of DNA into RNA using the four ribonucleoside triphosphates as substrates. The protein is DNA-directed RNA polymerase subunit alpha of Pelobacter propionicus (strain DSM 2379 / NBRC 103807 / OttBd1).